A 389-amino-acid polypeptide reads, in one-letter code: Ecto-ADP-ribosyltransferase 3 (389 aa).

A signal peptide spans 1–26 (MKTGHFEIVTMLLATMILVDIFQVKA). A disulfide bridge links Cys-43 with Cys-256. A TR mART core domain is found at 64 to 251 (QQLDTVWENA…LILQSINKTC (188 aa)). Tyr-101 and Arg-163 together coordinate NAD(+). Asn-248 is a glycosylation site (N-linked (GlcNAc...) asparagine). Tandem repeats lie at residues 283–292 (GEKNQKLEDH), 293–302 (SEKNWKLEDH), and 303–312 (GEKNQKLEDH). Residues 283-312 (GEKNQKLEDHSEKNWKLEDHGEKNQKLEDH) are 3 X 10 AA tandem repeats of [GS]-E-K-N-[QW]-K-L-E-D-H. The tract at residues 325–362 (MKIPEPFPLPEDKSQGNINNPTPGPVPVPGPKSHPSAS) is disordered. Thr-346 carries an O-linked (GalNAc...) threonine glycan. Over residues 346-356 (TPGPVPVPGPK) the composition is skewed to pro residues. A lipid anchor (GPI-anchor amidated serine) is attached at Ser-362. A propeptide spans 363 to 389 (SGKLLLPQFGMVIILISVSAINLFVAL) (removed in mature form).

The protein belongs to the Arg-specific ADP-ribosyltransferase family. Post-translationally, O-glycosylated with core 1 or possibly core 8 glycans. As to expression, testis specific.

The protein localises to the cell membrane. The enzyme catalyses L-arginyl-[protein] + NAD(+) = N(omega)-(ADP-D-ribosyl)-L-arginyl-[protein] + nicotinamide + H(+). In Homo sapiens (Human), this protein is Ecto-ADP-ribosyltransferase 3 (ART3).